Consider the following 418-residue polypeptide: Putative ion-transport protein YfeO (418 aa).

12 helical membrane passes run 10–30, 54–74, 99–119, 120–140, 149–169, 186–206, 223–243, 258–278, 300–320, 322–342, 343–363, and 371–391; these read LLLS…LIVV, DSPL…GLVI, ALPG…SLGP, EHPI…RLLP, ILAS…AALI, LFAP…FFHP, ILSG…AVWC, VLVL…GGPV, DYFL…ASGF, GGRI…LHEH, VPAV…VLVV, and LFMA…CIVM.

This sequence belongs to the chloride channel (TC 2.A.49) family.

The protein resides in the cell membrane. This is Putative ion-transport protein YfeO from Escherichia coli O139:H28 (strain E24377A / ETEC).